The primary structure comprises 651 residues: Forkhead box protein K2 (651 aa).

A compositionally biased stretch (low complexity) spans 1–13 (MAAAAALSGAGAP). The segment at 1 to 29 (MAAAAALSGAGAPPAGGGAGGGGSPPGGW) is disordered. Gly residues predominate over residues 14 to 26 (PAGGGAGGGGSPP). Serine 24 is subject to Phosphoserine. Residues 48–119 (VTIGRNSSQG…NGVFVDGVFQ (72 aa)) form the FHA domain. The tract at residues 120–162 (RRGAPPLQLPRVCTFRFPSTNIKITFTALSSEKREKQEAPESP) is required for interaction with DVL2 and SUDS3. Arginine 135 is subject to Omega-N-methylarginine. Disordered stretches follow at residues 150–171 (SEKREKQEAPESPVKPVQPHIS) and 194–251 (TISA…SKPP). Glycyl lysine isopeptide (Lys-Gly) (interchain with G-Cter in SUMO2) cross-links involve residues lysine 152 and lysine 155. The span at 194 to 203 (TISAANSCPS) shows a compositional bias: polar residues. Serine 230 is modified (phosphoserine). Over residues 233–249 (ENEKEASGGDSPKDDSK) the composition is skewed to basic and acidic residues. The fork-head DNA-binding region spans 249–344 (KPPYSYAQLI…EQAFRKRRPR (96 aa)). Positions 291–309 (KGWQNSIRHNLSLNRYFIK) are DNA-binding; major groove. Mg(2+) is bound by residues leucine 301, serine 302, asparagine 304, and phenylalanine 307. DNA-binding; minor groove regions lie at residues 319 to 323 (KGSFW) and 339 to 344 (RKRRPR). The interval 350-399 (RTPLGPLSSRSAPASPNHAGVLSAHSSGAQTPESLSREGSPAPLEPEPGA) is disordered. Serine 364 carries the post-translational modification Phosphoserine. Over residues 373-383 (AHSSGAQTPES) the composition is skewed to polar residues. Residues serine 389, serine 415, and serine 419 each carry the phosphoserine modification. Lysine 518 participates in a covalent cross-link: Glycyl lysine isopeptide (Lys-Gly) (interchain with G-Cter in SUMO2). Serine 590 bears the Phosphoserine mark. A compositionally biased stretch (polar residues) spans 601–614 (ASASLPTKRQNGDQ). A disordered region spans residues 601–623 (ASASLPTKRQNGDQAEQPELKRV). Residue lysine 624 forms a Glycyl lysine isopeptide (Lys-Gly) (interchain with G-Cter in SUMO2) linkage.

Component of SIN3A-, but not SIN3B-, containing multiprotein complexes. Interacts with DVL1, DVL2 (when phosphorylated) and DVL3; the interaction induces DVL2 nuclear translocation. Interacts with SUDS3. Interacts with BAP1 (when phosphorylated); leading to recruit the PR-DUB complex and repress FOXK2 target genes. Accessory component of the polycomb repressive deubiquitinase (PR-DUB) complex, at least composed of BAP1, one of ASXL1, ASXL2 or (probably) ASXL3 and one of MBD5 or MBD6. The PR-DUB core associates with a number of accessory proteins, including FOXK1, FOXK2, KDM1B, HCFC1 and OGT. Post-translationally, hyperphosphorylated during mitosis by CDK1 and, to a lower extent, CDK2. Phosphorylation at Ser-364 and Ser-419 affects stability by promoting degradation. In terms of tissue distribution, expressed in a wide range of adult brain regions, namely the piriform cortex, the major islands of Calleja and cells lining the lateral ventricles, the bed nucleus of stria terminalis, the paraventricular thalamic nucleus, habenula and all structures of the hippocampus. Also present in the hypothalamus, cerebral cortex and in the Purkinje cell layer in the cerebellum. Additionally expressed in dopamine neurons of the substantia and more sparsely in the ventral tegmental area.

The protein localises to the nucleus. The protein resides in the cytoplasm. Its function is as follows. Transcriptional regulator involved in different processes such as glucose metabolism, aerobic glycolysis and autophagy. Recognizes and binds the forkhead DNA sequence motif (5'-GTAAACA-3') and can both act as a transcription activator or repressor, depending on the context. Together with FOXK1, acts as a key regulator of metabolic reprogramming towards aerobic glycolysis, a process in which glucose is converted to lactate in the presence of oxygen. Acts by promoting expression of enzymes for glycolysis (such as hexokinase-2 (HK2), phosphofructokinase, pyruvate kinase (PKLR) and lactate dehydrogenase), while suppressing further oxidation of pyruvate in the mitochondria by up-regulating pyruvate dehydrogenase kinases PDK1 and PDK4. Probably plays a role in gluconeogenesis during overnight fasting, when lactate from white adipose tissue and muscle is the main substrate. Together with FOXK1, acts as a negative regulator of autophagy in skeletal muscle: in response to starvation, enters the nucleus, binds the promoters of autophagy genes and represses their expression, preventing proteolysis of skeletal muscle proteins. In addition to the 5'-GTAAACA-3' DNA motif, also binds the 5'-TGANTCA-3' palindromic DNA motif, and co-associates with JUN/AP-1 to activate transcription. Also able to bind to a minimal DNA heteroduplex containing a G/T-mismatch with 5'-TRT[G/T]NB-3' sequence. Binds to NFAT-like motifs (purine-rich) in the IL2 promoter. Positively regulates WNT/beta-catenin signaling by translocating DVL proteins into the nucleus. Accessory component of the polycomb repressive deubiquitinase (PR-DUB) complex; recruits the PR-DUB complex to specific FOXK2-bound genes. This is Forkhead box protein K2 from Mus musculus (Mouse).